We begin with the raw amino-acid sequence, 372 residues long: Rab9 effector protein with kelch motifs (372 aa).

Kelch repeat units lie at residues K49–S95, S100–A146, H151–T203, K204–A250, and H254–W303. Positions L321–E342 are disordered. Residues Q322–E342 are compositionally biased toward basic and acidic residues. A Kelch 6 repeat occupies L349–D372.

As to quaternary structure, interacts with PIKFYVE; the interaction recruits RABEPK to the endosomal membrane. Interacts with RAB9 in its GTP-bound conformation. Phosphorylated on Ser residues by PIKFYVE.

It is found in the cytoplasm. Its subcellular location is the endosome membrane. Its function is as follows. Rab9 effector required for endosome to trans-Golgi network (TGN) transport. This chain is Rab9 effector protein with kelch motifs (Rabepk), found in Rattus norvegicus (Rat).